The chain runs to 215 residues: LexA repressor (215 aa).

A DNA-binding region (H-T-H motif) is located at residues 28-48; it reads RAEIAAELGFSSPNAAEEHLR. Residues Ser133 and Lys170 each act as for autocatalytic cleavage activity in the active site.

Belongs to the peptidase S24 family. In terms of assembly, homodimer.

It catalyses the reaction Hydrolysis of Ala-|-Gly bond in repressor LexA.. Its function is as follows. Represses a number of genes involved in the response to DNA damage (SOS response), including recA and lexA. In the presence of single-stranded DNA, RecA interacts with LexA causing an autocatalytic cleavage which disrupts the DNA-binding part of LexA, leading to derepression of the SOS regulon and eventually DNA repair. This chain is LexA repressor, found in Burkholderia vietnamiensis (strain G4 / LMG 22486) (Burkholderia cepacia (strain R1808)).